We begin with the raw amino-acid sequence, 1064 residues long: MRTWLLAVLLLSVIAVTYGQGECDSDPCENGSTCQEGEGSYICQCPMGYDGQNCDRFTGSNCGYNVFDANGMIDSPNYPAMYNNRADCLYLVRITKARSITFTIEDFMTEVFKDVVEYGIGPEADFNQALGSFEGNLTQDDVIPAPFTVQGDQAWFIFSTDRNIVNRGFRITFSSDGDDCDPNLCQNGAACTDLVNDYACTCPPGFTGRNCEIDIDECASDPCQNGGACVDGVNGYVCNCVPGFDGDECENNINECASSPCLNGGICVDGVNMFECTCLAGFTGVRCEVNIDECASAPCQNGGICIDGINGYTCSCPLGFSGDNCENNDDECSSIPCLNGGTCVDLVNAYMCVCAPGWTGPTCADNIDECASAPCQNGGVCIDGVNGYMCDCQPGYTGTHCETDIDECARPPCQNGGDCVDGVNGYVCICAPGFDGLNCENNIDECASRPCQNGAVCVDGVNGFVCTCSAGYTGVLCETDINECASMPCLNGGVCTDLVNGYICTCAAGFEGTNCETDTDECASFPCQNGATCTDQVNGYVCTCVPGYTGVLCETDINECASFPCLNGGTCNDQVNGYVCVCAQDTSVSTCETDRDECASAPCLNGGACMDVVNGFVCTCLPGWEGTNCEINTDECASSPCMNGGLCVDQVNSYVCFCLPGFTGIHCGTEIDECASSPCLNGGQCIDRVDSYECVCAAGYTAVRCQINIDECASAPCQNGGVCVDGVNGYVCNCAPGYTGDNCETEIDECASMPCLNGGACIEMVNGYTCQCVAGYTGVICETDIDECASAPCQNGGVCTDTINGYICACVPGFTGSNCETNIDECASDPCLNGGICVDGVNGFVCQCPPNYSGTYCEISLDACRSMPCQNGATCVNVGADYVCECVPGYAGQNCEIDINECASLPCQNGGLCIDGIAGYTCQCRLGYIGVNCEEVGFCDLEGMWYNECNDQVTITKTSTGMMLGDYMTYNERALGYAAPTVVVGYASNNYDFPSFGFTVVRDNGQSTTSWTGQCHLCDGEEVLYTTWINTNMVSTCQDIKKSNMVGQDKWTRYEQSIAPQPDA.

An N-terminal signal peptide occupies residues 1–19 (MRTWLLAVLLLSVIAVTYG). One can recognise an EGF-like 1 domain in the interval 20 to 55 (QGECDSDPCENGSTCQEGEGSYICQCPMGYDGQNCD). Intrachain disulfides connect cysteine 23–cysteine 34, cysteine 28–cysteine 43, cysteine 45–cysteine 54, and cysteine 62–cysteine 88. Asparagine 30 is a glycosylation site (N-linked (GlcNAc...) asparagine). The region spanning 62 to 175 (CGYNVFDANG…NRGFRITFSS (114 aa)) is the CUB domain. An N-linked (GlcNAc...) asparagine glycan is attached at asparagine 136. The 37-residue stretch at 176-212 (DGDDCDPNLCQNGAACTDLVNDYACTCPPGFTGRNCE) folds into the EGF-like 2; calcium-binding domain. Intrachain disulfides connect cysteine 180/cysteine 191, cysteine 185/cysteine 200, cysteine 202/cysteine 211, cysteine 218/cysteine 229, cysteine 223/cysteine 238, cysteine 240/cysteine 249, cysteine 256/cysteine 267, cysteine 261/cysteine 276, cysteine 278/cysteine 287, cysteine 294/cysteine 305, cysteine 299/cysteine 314, cysteine 316/cysteine 325, cysteine 332/cysteine 343, cysteine 337/cysteine 352, cysteine 354/cysteine 363, cysteine 370/cysteine 381, cysteine 375/cysteine 390, cysteine 392/cysteine 401, cysteine 408/cysteine 419, cysteine 413/cysteine 428, cysteine 430/cysteine 439, cysteine 446/cysteine 457, cysteine 451/cysteine 466, cysteine 468/cysteine 477, cysteine 484/cysteine 495, cysteine 489/cysteine 504, cysteine 506/cysteine 515, cysteine 522/cysteine 533, cysteine 527/cysteine 542, cysteine 544/cysteine 553, cysteine 560/cysteine 571, cysteine 565/cysteine 580, cysteine 582/cysteine 591, cysteine 598/cysteine 609, cysteine 603/cysteine 618, cysteine 620/cysteine 629, cysteine 636/cysteine 647, cysteine 641/cysteine 656, cysteine 658/cysteine 667, cysteine 674/cysteine 685, cysteine 679/cysteine 694, cysteine 696/cysteine 705, cysteine 712/cysteine 723, cysteine 717/cysteine 732, cysteine 734/cysteine 743, cysteine 750/cysteine 761, cysteine 755/cysteine 770, cysteine 772/cysteine 781, cysteine 788/cysteine 799, cysteine 793/cysteine 808, cysteine 810/cysteine 819, cysteine 826/cysteine 837, cysteine 831/cysteine 846, cysteine 848/cysteine 857, cysteine 864/cysteine 875, cysteine 869/cysteine 884, cysteine 886/cysteine 895, cysteine 902/cysteine 913, cysteine 907/cysteine 922, cysteine 924/cysteine 933, and cysteine 939/cysteine 1015. The EGF-like 3; calcium-binding domain occupies 214-250 (DIDECASDPCQNGGACVDGVNGYVCNCVPGFDGDECE). One can recognise an EGF-like 4; calcium-binding domain in the interval 252 to 288 (NINECASSPCLNGGICVDGVNMFECTCLAGFTGVRCE). The 37-residue stretch at 290 to 326 (NIDECASAPCQNGGICIDGINGYTCSCPLGFSGDNCE) folds into the EGF-like 5; calcium-binding domain. Residues 328-364 (NDDECSSIPCLNGGTCVDLVNAYMCVCAPGWTGPTCA) enclose the EGF-like 6; calcium-binding domain. The EGF-like 7; calcium-binding domain maps to 366-402 (NIDECASAPCQNGGVCIDGVNGYMCDCQPGYTGTHCE). In terms of domain architecture, EGF-like 8; calcium-binding spans 404–440 (DIDECARPPCQNGGDCVDGVNGYVCICAPGFDGLNCE). The EGF-like 9; calcium-binding domain maps to 442-478 (NIDECASRPCQNGAVCVDGVNGFVCTCSAGYTGVLCE). Residues 480-516 (DINECASMPCLNGGVCTDLVNGYICTCAAGFEGTNCE) enclose the EGF-like 10; calcium-binding domain. The region spanning 518-554 (DTDECASFPCQNGATCTDQVNGYVCTCVPGYTGVLCE) is the EGF-like 11; calcium-binding domain. The EGF-like 12; calcium-binding domain occupies 556 to 592 (DINECASFPCLNGGTCNDQVNGYVCVCAQDTSVSTCE). One can recognise an EGF-like 13; calcium-binding domain in the interval 594 to 630 (DRDECASAPCLNGGACMDVVNGFVCTCLPGWEGTNCE). The EGF-like 14; calcium-binding domain maps to 632-668 (NTDECASSPCMNGGLCVDQVNSYVCFCLPGFTGIHCG). The 37-residue stretch at 670 to 706 (EIDECASSPCLNGGQCIDRVDSYECVCAAGYTAVRCQ) folds into the EGF-like 15; calcium-binding domain. The EGF-like 16; calcium-binding domain occupies 708-744 (NIDECASAPCQNGGVCVDGVNGYVCNCAPGYTGDNCE). The EGF-like 17; calcium-binding domain occupies 746–782 (EIDECASMPCLNGGACIEMVNGYTCQCVAGYTGVICE). In terms of domain architecture, EGF-like 18; calcium-binding spans 784-820 (DIDECASAPCQNGGVCTDTINGYICACVPGFTGSNCE). Positions 822–858 (NIDECASDPCLNGGICVDGVNGFVCQCPPNYSGTYCE) constitute an EGF-like 19; calcium-binding domain. The N-linked (GlcNAc...) asparagine glycan is linked to asparagine 851. One can recognise an EGF-like 20 domain in the interval 860–896 (SLDACRSMPCQNGATCVNVGADYVCECVPGYAGQNCE). Residues 898-934 (DINECASLPCQNGGLCIDGIAGYTCQCRLGYIGVNCE) enclose the EGF-like 21; calcium-binding domain. The Avidin-like domain occupies 937–1056 (GFCDLEGMWY…GQDKWTRYEQ (120 aa)).

As to quaternary structure, homotetramer.

The protein localises to the secreted. The protein resides in the extracellular space. It localises to the cytoplasmic vesicle. It is found in the extracellular matrix. Its subcellular location is the hyaline layer. The protein localises to the apical lamina. In terms of biological role, forms the apical lamina, a component of the extracellular matrix. The sequence is that of Fibropellin-1 (EGF1) from Strongylocentrotus purpuratus (Purple sea urchin).